The primary structure comprises 241 residues: Small ribosomal subunit protein uS2 (241 aa).

This sequence belongs to the universal ribosomal protein uS2 family.

This is Small ribosomal subunit protein uS2 from Sodalis glossinidius (strain morsitans).